The primary structure comprises 478 residues: Ribosomal RNA small subunit methyltransferase F (478 aa).

Residues 126–132 (AAAPGSK), Glu-150, Asp-177, and Asp-195 each bind S-adenosyl-L-methionine. Cys-248 acts as the Nucleophile in catalysis.

The protein belongs to the class I-like SAM-binding methyltransferase superfamily. RsmB/NOP family.

It is found in the cytoplasm. It carries out the reaction cytidine(1407) in 16S rRNA + S-adenosyl-L-methionine = 5-methylcytidine(1407) in 16S rRNA + S-adenosyl-L-homocysteine + H(+). Functionally, specifically methylates the cytosine at position 1407 (m5C1407) of 16S rRNA. This is Ribosomal RNA small subunit methyltransferase F from Erwinia tasmaniensis (strain DSM 17950 / CFBP 7177 / CIP 109463 / NCPPB 4357 / Et1/99).